A 2620-amino-acid chain; its full sequence is Ubiquitin carboxyl-terminal hydrolase 24 (2620 aa).

One can recognise a UBA domain in the interval 3–44 (SEEEQHMTTLLCMGFSDPATIRKALRLAKNDINEAVALLTNE). A disordered region spans residues 45-102 (RPGLDYGGYEPMDSGGGPSPGPGGGPRGDGGGDGGGGGPSRGGSTGGGGGFDPPPAYH). Over residues 58-95 (SGGGPSPGPGGGPRGDGGGDGGGGGPSRGGSTGGGGGF) the composition is skewed to gly residues. Residues serine 63 and serine 88 each carry the phosphoserine modification. The residue at position 942 (tyrosine 942) is a Phosphotyrosine. Disordered regions lie at residues 1034-1054 (TSGS…SSSS) and 1129-1151 (TLLS…QQHQ). A compositionally biased stretch (low complexity) spans 1131–1151 (LSESSSQSSKSPSLSSKQQHQ). Phosphoserine is present on residues serine 1141 and serine 1285. In terms of domain architecture, USP spans 1689–2042 (VGLRNGGATC…NAYMLFYQRV (354 aa)). Cysteine 1698 functions as the Nucleophile in the catalytic mechanism. The disordered stretch occupies residues 1921–1945 (ARQDSSSEVGENGRSVDQGGGGSPR). Phosphoserine is present on serine 1943. The active-site Proton acceptor is histidine 1970. A phosphoserine mark is found at serine 2047, serine 2077, and serine 2561. The interval 2063–2090 (AEDLSLSAPSSPEISPQSSPRPHRPNND) is disordered. Positions 2069–2082 (SAPSSPEISPQSSP) are enriched in low complexity. Threonine 2565 is subject to Phosphothreonine. The interval 2575–2620 (EKEQSGSSNGSESSPANENGDRHLQQGSESPMMIGELRSDLDDVDP) is disordered. A compositionally biased stretch (low complexity) spans 2579 to 2592 (SGSSNGSESSPANE). Serine 2604 is subject to Phosphoserine. Over residues 2611 to 2620 (LRSDLDDVDP) the composition is skewed to basic and acidic residues.

The protein belongs to the peptidase C19 family. (Microbial infection) Interacts with human cytomegalovirus protein UL38.

It carries out the reaction Thiol-dependent hydrolysis of ester, thioester, amide, peptide and isopeptide bonds formed by the C-terminal Gly of ubiquitin (a 76-residue protein attached to proteins as an intracellular targeting signal).. Functionally, ubiquitin-specific protease that regulates cell survival in various contexts through modulating the protein stability of some of its substrates including DDB2, MCL1 or TP53. Plays a positive role on ferritinophagy where ferritin is degraded in lysosomes and releases free iron. The polypeptide is Ubiquitin carboxyl-terminal hydrolase 24 (USP24) (Homo sapiens (Human)).